The following is a 391-amino-acid chain: Serpin B13 (391 aa).

The protein belongs to the serpin family. Ov-serpin subfamily. As to expression, skin specific.

It localises to the cytoplasm. Its function is as follows. May play a role in the proliferation or differentiation of keratinocytes. The protein is Serpin B13 (SERPINB13) of Homo sapiens (Human).